Here is a 30-residue protein sequence, read N- to C-terminus: Cycloviolacin-O4 (30 aa).

The segment at residues 1–30 (GIPCGESCVWIPCISSAIGCSCKNKVCYRN) is a cross-link (cyclopeptide (Gly-Asn)). Cystine bridges form between Cys4/Cys20, Cys8/Cys22, and Cys13/Cys27.

This is a cyclic peptide. Expressed in petals, petioles, roots and runners but not in leaves (at protein level).

Functionally, probably participates in a plant defense mechanism. The sequence is that of Cycloviolacin-O4 from Viola odorata (Sweet violet).